We begin with the raw amino-acid sequence, 341 residues long: SVRSGPFGQIFRPDNFVFGQSGAGNNWAKGHYTEGAELVDSVLDVVRKEAESCDCLQGFQLTHSLGGGTGSGMGTLLISKIREEYPDRIMNTFSVVPSPKVSDTVVEPYNATLSVHQLVENTDETYCIDNEALYDICFRTLKLTTPTYGDLNHLVSATMSGVTTCLRFPGQLNADLRKLAVNMVPFPRLHFFMPGFAPLTSRGSQQYRALTVPELTQQMFDAKNMMAACDPRHGRYLTVAAIFRGRMSMKEVDEQMLNVQNKNSSYFVEWIPNNVKTAVCDIPPRGLKMSATFIGNSTAIQELFKRISEQFTAMFRRKAFLHWYTGEGMDEMEFTEAESNM.

GTP is bound by residues Ser64, Gly68, Thr69, Gly70, Asn130, and Asn152.

Belongs to the tubulin family. As to quaternary structure, dimer of alpha and beta chains. A typical microtubule is a hollow water-filled tube with an outer diameter of 25 nm and an inner diameter of 15 nM. Alpha-beta heterodimers associate head-to-tail to form protofilaments running lengthwise along the microtubule wall with the beta-tubulin subunit facing the microtubule plus end conferring a structural polarity. Microtubules usually have 13 protofilaments but different protofilament numbers can be found in some organisms and specialized cells. Requires Mg(2+) as cofactor.

The protein resides in the cytoplasm. It is found in the cytoskeleton. Tubulin is the major constituent of microtubules, a cylinder consisting of laterally associated linear protofilaments composed of alpha- and beta-tubulin heterodimers. Microtubules grow by the addition of GTP-tubulin dimers to the microtubule end, where a stabilizing cap forms. Below the cap, tubulin dimers are in GDP-bound state, owing to GTPase activity of alpha-tubulin. This is Tubulin beta chain from Haliotis discus (Abalone).